The sequence spans 161 residues: MKAVSPVRPSGRKAPSGCGGGELALRCLAEHGHSLGGSAAAAAAAAAARCKAAEAAADEPALCLQCDMNDCYSRLRRLVPTIPPNKKVSKVEILPHVIDYILDLQLALETHPALLRQPPPPAPPHHPAGTCPAAPPRTPLTALNTDPAGAVNKQGDSILCR.

A bHLH domain is found at 52–104; the sequence is AAEAAADEPALCLQCDMNDCYSRLRRLVPTIPPNKKVSKVEILPHVIDYILDL. A disordered region spans residues 116 to 161; the sequence is RQPPPPAPPHHPAGTCPAAPPRTPLTALNTDPAGAVNKQGDSILCR. Over residues 117–126 the composition is skewed to pro residues; sequence QPPPPAPPHH.

In terms of assembly, heterodimer with other HLH proteins.

Its subcellular location is the nucleus. Transcriptional regulator (lacking a basic DNA binding domain) which negatively regulates the basic helix-loop-helix (bHLH) transcription factors by forming heterodimers and inhibiting their DNA binding and transcriptional activity. Implicated in regulating a variety of cellular processes, including cellular growth, senescence, differentiation, apoptosis, angiogenesis, and neoplastic transformation. This Sus scrofa (Pig) protein is DNA-binding protein inhibitor ID-4 (ID4).